Consider the following 230-residue polypeptide: Phosducin-like protein 1 (230 aa).

Met-1 is subject to N-acetylmethionine. A Phosducin domain is found at 16–166 (AEKDKHTTVD…VVGYKNGLEK (151 aa)). A coiled-coil region spans residues 25-79 (DSDDKSSGEENLDELLNELDRELDEDHEFLSAYRSERLQQISDHLKQVKKNVEDD). A thioredoxin fold region spans residues 81 to 230 (YGRLQCIDNE…RSESDSDLDI (150 aa)).

The protein belongs to the phosducin family. As to quaternary structure, interacts with the G protein beta-gamma subunit complex (STE4-STE18 complex).

The protein localises to the cytoplasm. In terms of biological role, not essential for growth. Inhibits early G-protein signaling events following pheromone stimulation. May help create heterodimerizable beta-tubulin by facilitating the efficient transfer of nascent beta-tubulin polypeptides to the folding apparatus. The chain is Phosducin-like protein 1 (PLP1) from Saccharomyces cerevisiae (strain ATCC 204508 / S288c) (Baker's yeast).